Consider the following 162-residue polypeptide: Transcription antitermination protein NusB (162 aa).

The protein belongs to the NusB family.

In terms of biological role, involved in transcription antitermination. Required for transcription of ribosomal RNA (rRNA) genes. Binds specifically to the boxA antiterminator sequence of the ribosomal RNA (rrn) operons. The sequence is that of Transcription antitermination protein NusB from Xanthomonas euvesicatoria pv. vesicatoria (strain 85-10) (Xanthomonas campestris pv. vesicatoria).